The sequence spans 301 residues: MSEPFKSGFVAIVGRPNVGKSTLLNHIIGQKIAIMSDKAQTTRNKVQGVYTTDESQIIFIDTPGIHKPKHKLGDFMVKIALNTFQEVDLIYFVIDASTGFGRGDEFIIEKLKNVQTPVFLLINKIDLISPEDLFKLIEQYRELLDFEEIIPISALQGNNVPNLLEQTNANLEIGPMYYPKDQITDHPERFIISELIREQVLQLTREEVPHSVAVVIEGIEKNPKTEKLTINATIIVERSTQKGIIIGKQGQMLKQIGMRARKEIESLLGSKVFLEIWVKVQKNWRDKEHYLHDYGFDREEY.

Positions lysine 6–isoleucine 173 constitute an Era-type G domain. A G1 region spans residues glycine 14 to serine 21. Glycine 14 to serine 21 contacts GTP. A G2 region spans residues glutamine 40–asparagine 44. The tract at residues aspartate 61–glycine 64 is G3. GTP contacts are provided by residues aspartate 61–isoleucine 65 and asparagine 123–aspartate 126. The tract at residues asparagine 123 to aspartate 126 is G4. The tract at residues isoleucine 152–alanine 154 is G5. One can recognise a KH type-2 domain in the interval threonine 204 to lysine 282.

The protein belongs to the TRAFAC class TrmE-Era-EngA-EngB-Septin-like GTPase superfamily. Era GTPase family. In terms of assembly, monomer.

It localises to the cytoplasm. The protein resides in the cell membrane. An essential GTPase that binds both GDP and GTP, with rapid nucleotide exchange. Plays a role in 16S rRNA processing and 30S ribosomal subunit biogenesis and possibly also in cell cycle regulation and energy metabolism. The chain is GTPase Era from Listeria welshimeri serovar 6b (strain ATCC 35897 / DSM 20650 / CCUG 15529 / CIP 8149 / NCTC 11857 / SLCC 5334 / V8).